A 508-amino-acid polypeptide reads, in one-letter code: ATP synthase subunit alpha, chloroplastic (508 aa).

An ATP-binding site is contributed by 170–177 (GDRQTGKT).

The protein belongs to the ATPase alpha/beta chains family. In terms of assembly, F-type ATPases have 2 components, CF(1) - the catalytic core - and CF(0) - the membrane proton channel. CF(1) has five subunits: alpha(3), beta(3), gamma(1), delta(1), epsilon(1). CF(0) has four main subunits: a, b, b' and c.

The protein resides in the plastid. It localises to the chloroplast thylakoid membrane. The enzyme catalyses ATP + H2O + 4 H(+)(in) = ADP + phosphate + 5 H(+)(out). In terms of biological role, produces ATP from ADP in the presence of a proton gradient across the membrane. The alpha chain is a regulatory subunit. The polypeptide is ATP synthase subunit alpha, chloroplastic (Lactuca sativa (Garden lettuce)).